Reading from the N-terminus, the 126-residue chain is MAILGLGTDIVEIARIEAVIARSGERLARRVLSDNEWEIWKTHHQPVRFLAKRFAVKEAAAKAFGTGIRNGLAFNQFEVFNDELGKPRLRLWGEALKLAEKLGVANMHVTLADERHYACATVIIES.

Asp9 and Glu58 together coordinate Mg(2+).

Belongs to the P-Pant transferase superfamily. AcpS family. Homodimer. Requires Mg(2+) as cofactor.

The protein resides in the cytoplasm. The catalysed reaction is apo-[ACP] + CoA = holo-[ACP] + adenosine 3',5'-bisphosphate + H(+). Its function is as follows. Transfers the 4'-phosphopantetheine moiety from coenzyme A to the 'Ser-36' of acyl-carrier-protein. This is Holo-[acyl-carrier-protein] synthase from Escherichia coli O157:H7.